The chain runs to 184 residues: Elongation factor P (184 aa).

It belongs to the elongation factor P family.

The protein resides in the cytoplasm. It functions in the pathway protein biosynthesis; polypeptide chain elongation. Involved in peptide bond synthesis. Stimulates efficient translation and peptide-bond synthesis on native or reconstituted 70S ribosomes in vitro. Probably functions indirectly by altering the affinity of the ribosome for aminoacyl-tRNA, thus increasing their reactivity as acceptors for peptidyl transferase. The polypeptide is Elongation factor P (Albidiferax ferrireducens (strain ATCC BAA-621 / DSM 15236 / T118) (Rhodoferax ferrireducens)).